Reading from the N-terminus, the 147-residue chain is Large ribosomal subunit protein bL9 (147 aa).

Belongs to the bacterial ribosomal protein bL9 family.

Binds to the 23S rRNA. This is Large ribosomal subunit protein bL9 from Clostridium tetani (strain Massachusetts / E88).